The chain runs to 122 residues: Large ribosomal subunit protein bL12 (122 aa).

This sequence belongs to the bacterial ribosomal protein bL12 family. In terms of assembly, homodimer. Part of the ribosomal stalk of the 50S ribosomal subunit. Forms a multimeric L10(L12)X complex, where L10 forms an elongated spine to which 2 to 4 L12 dimers bind in a sequential fashion. Binds GTP-bound translation factors.

Functionally, forms part of the ribosomal stalk which helps the ribosome interact with GTP-bound translation factors. Is thus essential for accurate translation. The chain is Large ribosomal subunit protein bL12 from Stutzerimonas stutzeri (strain A1501) (Pseudomonas stutzeri).